The sequence spans 86 residues: Small ribosomal subunit protein bS16 (86 aa).

It belongs to the bacterial ribosomal protein bS16 family.

This chain is Small ribosomal subunit protein bS16, found in Stenotrophomonas maltophilia (strain K279a).